A 203-amino-acid polypeptide reads, in one-letter code: bMERB domain-containing protein 1 (203 aa).

Residues 3 to 149 form the bMERB domain; that stretch reads LKQSLSVHLE…EQEEDKEMAD (147 aa). The tract at residues 161 to 184 is disordered; the sequence is VTKTSASSRAEKKAEPPPSKPTVA.

This is bMERB domain-containing protein 1 (Bmerb1) from Mus musculus (Mouse).